The sequence spans 100 residues: MIPLQHGLILAAVLFVLGFTCLVLRRNLLFMLIGLEIMINSAALAFVVGGSYWGQTDGQIMYILAISLAAAEASIGLALLLQLHRHRQNLNIDTVSEMRG.

3 helical membrane passes run 4–24 (LQHG…CLVL), 28–48 (LLFM…AFVV), and 60–80 (IMYI…LALL).

This sequence belongs to the complex I subunit 4L family. In terms of assembly, NDH-1 is composed of 13 different subunits. Subunits NuoA, H, J, K, L, M, N constitute the membrane sector of the complex.

Its subcellular location is the cell inner membrane. It catalyses the reaction a quinone + NADH + 5 H(+)(in) = a quinol + NAD(+) + 4 H(+)(out). NDH-1 shuttles electrons from NADH, via FMN and iron-sulfur (Fe-S) centers, to quinones in the respiratory chain. The immediate electron acceptor for the enzyme in this species is believed to be ubiquinone. Couples the redox reaction to proton translocation (for every two electrons transferred, four hydrogen ions are translocated across the cytoplasmic membrane), and thus conserves the redox energy in a proton gradient. The sequence is that of NADH-quinone oxidoreductase subunit K from Proteus mirabilis (strain HI4320).